A 498-amino-acid polypeptide reads, in one-letter code: ATP synthase subunit beta, chloroplastic (498 aa).

172–179 serves as a coordination point for ATP; sequence GGAGVGKT.

This sequence belongs to the ATPase alpha/beta chains family. As to quaternary structure, F-type ATPases have 2 components, CF(1) - the catalytic core - and CF(0) - the membrane proton channel. CF(1) has five subunits: alpha(3), beta(3), gamma(1), delta(1), epsilon(1). CF(0) has four main subunits: a(1), b(1), b'(1) and c(9-12).

Its subcellular location is the plastid. The protein localises to the chloroplast thylakoid membrane. It carries out the reaction ATP + H2O + 4 H(+)(in) = ADP + phosphate + 5 H(+)(out). Functionally, produces ATP from ADP in the presence of a proton gradient across the membrane. The catalytic sites are hosted primarily by the beta subunits. This chain is ATP synthase subunit beta, chloroplastic, found in Nymphaea odorata (White water lily).